A 152-amino-acid chain; its full sequence is Small ribosomal subunit protein uS15 (152 aa).

Positions 1 to 11 are enriched in basic residues; the sequence is MAKMHTKRKGK. The disordered stretch occupies residues 1–23; it reads MAKMHTKRKGKSSSTRPIRTDPP.

Belongs to the universal ribosomal protein uS15 family. As to quaternary structure, part of the 30S ribosomal subunit.

The chain is Small ribosomal subunit protein uS15 from Methanosarcina acetivorans (strain ATCC 35395 / DSM 2834 / JCM 12185 / C2A).